The chain runs to 229 residues: Cytosolic-abundant heat soluble protein 107838 (229 aa).

The disordered stretch occupies residues 1–29 (MSAEAMNMNMNQDAVFIPPPEGEQYERKE). Positions 109–145 (LSANYQKEVERKTEAYRKQQEVEADKIRKELEKQHLR) form a coiled coil. CAHS motif stretches follow at residues 124–142 (YRKQ…LEKQ) and 161–179 (QKKM…MDRE). Residues 202–218 (SSAAGTETGGQVVSESQ) show a composition bias toward polar residues. Positions 202 to 229 (SSAAGTETGGQVVSESQKFTERNRQIKQ) are disordered. Positions 219–229 (KFTERNRQIKQ) are enriched in basic and acidic residues.

Belongs to the Cytosolic-abundant heat soluble protein (CAHS) family.

It is found in the cytoplasm. Its function is as follows. CAHS proteins are cytosolic heat soluble proteins that seem to contribute to the anhydrobiosis in tardigrades, but their specific mechanisms are yet to be identified. It is possible that protection during anhydrobiosis might occur via the stabilization of vitrifying small molecules such as sugars, but not via the direct glass transition of CAHS proteins themselves. The polypeptide is Cytosolic-abundant heat soluble protein 107838 (Paramacrobiotus richtersi (Water bear)).